The chain runs to 2324 residues: Acetyl-CoA carboxylase (2324 aa).

Met-1 carries the N-acetylmethionine modification. The disordered stretch occupies residues 1–34 (MEESSQPAKPLEMNPHSRFIIGSVSEDNSEDETS). Phosphoserine occurs at positions 78 and 80. The Biotin carboxylation domain maps to 117–618 (VIEKVLIANN…DTGWLDRLIA (502 aa)). The 192-residue stretch at 275-466 (QKRILNVPQE…LPAAQLQIAM (192 aa)) folds into the ATP-grasp domain. 315-320 (GGGGKG) provides a ligand contact to ATP. Mn(2+)-binding residues include Glu-424, Glu-437, and Asn-439. Residue Arg-441 is part of the active site. A Biotinyl-binding domain is found at 745–819 (FEKENDPSIL…DPGCVIAKLQ (75 aa)). The residue at position 786 (Lys-786) is an N6-biotinyllysine. Ser-1193 bears the Phosphoserine mark. The CoA carboxyltransferase N-terminal domain maps to 1553 to 1891 (PYVTKDLLQS…SVYSPVPILK (339 aa)). The carboxyltransferase stretch occupies residues 1553–2211 (PYVTKDLLQS…EDVVKKKIHD (659 aa)). Arg-1800, Lys-2104, and Arg-2106 together coordinate CoA. Residues 1895–2211 (PIDRTIDFVP…EDVVKKKIHD (317 aa)) form the CoA carboxyltransferase C-terminal domain.

Biotin is required as a cofactor. It depends on Mn(2+) as a cofactor.

Its subcellular location is the cytoplasm. The catalysed reaction is hydrogencarbonate + acetyl-CoA + ATP = malonyl-CoA + ADP + phosphate + H(+). It carries out the reaction N(6)-biotinyl-L-lysyl-[protein] + hydrogencarbonate + ATP = N(6)-carboxybiotinyl-L-lysyl-[protein] + ADP + phosphate + H(+). The protein operates within lipid metabolism; malonyl-CoA biosynthesis; malonyl-CoA from acetyl-CoA: step 1/1. Its activity is regulated as follows. By phosphorylation. Its function is as follows. Catalyzes the rate-limiting reaction in the biogenesis of long-chain fatty acids. Carries out three functions: biotin carboxyl carrier protein, biotin carboxylase and carboxyltransferase. This is Acetyl-CoA carboxylase (ACAC) from Gallus gallus (Chicken).